Reading from the N-terminus, the 82-residue chain is Small ribosomal subunit protein uS17 (82 aa).

The protein belongs to the universal ribosomal protein uS17 family. Part of the 30S ribosomal subunit.

Functionally, one of the primary rRNA binding proteins, it binds specifically to the 5'-end of 16S ribosomal RNA. This Aeromonas salmonicida (strain A449) protein is Small ribosomal subunit protein uS17.